Here is a 751-residue protein sequence, read N- to C-terminus: Glutathione biosynthesis bifunctional protein GshAB (751 aa).

A glutamate--cysteine ligase region spans residues 1–336 (MELDAVGKAI…QADQLTRQVL (336 aa)).

The protein in the N-terminal section; belongs to the glutamate--cysteine ligase type 1 family. Type 2 subfamily. Monomer.

The enzyme catalyses L-cysteine + L-glutamate + ATP = gamma-L-glutamyl-L-cysteine + ADP + phosphate + H(+). It carries out the reaction gamma-L-glutamyl-L-cysteine + glycine + ATP = glutathione + ADP + phosphate + H(+). The protein operates within sulfur metabolism; glutathione biosynthesis; glutathione from L-cysteine and L-glutamate: step 1/2. It functions in the pathway sulfur metabolism; glutathione biosynthesis; glutathione from L-cysteine and L-glutamate: step 2/2. In terms of biological role, synthesizes glutathione from L-glutamate and L-cysteine via gamma-L-glutamyl-L-cysteine. The sequence is that of Glutathione biosynthesis bifunctional protein GshAB (gshAB) from Lactiplantibacillus plantarum (strain ATCC BAA-793 / NCIMB 8826 / WCFS1) (Lactobacillus plantarum).